Consider the following 449-residue polypeptide: UDP-N-acetylmuramate--L-alanine ligase (449 aa).

121–127 (GAHGKSS) lines the ATP pocket.

This sequence belongs to the MurCDEF family.

It is found in the cytoplasm. It catalyses the reaction UDP-N-acetyl-alpha-D-muramate + L-alanine + ATP = UDP-N-acetyl-alpha-D-muramoyl-L-alanine + ADP + phosphate + H(+). Its pathway is cell wall biogenesis; peptidoglycan biosynthesis. In terms of biological role, cell wall formation. This Helicobacter pylori (strain ATCC 700392 / 26695) (Campylobacter pylori) protein is UDP-N-acetylmuramate--L-alanine ligase.